The primary structure comprises 569 residues: Dihydroorotate dehydrogenase (quinone), mitochondrial (569 aa).

The N-terminal 23 residues, 1-23, are a transit peptide targeting the mitochondrion; that stretch reads MISKLKPQFMFLPKKHILSYCRK. The chain crosses the membrane as a helical span at residues 143–163; it reads IIFLLFVSLFGLYGFFESYNP. Residues 225-229 and Thr249 contribute to the FMN site; that span reads AGFDK. A substrate-binding site is contributed by Lys229. Substrate-binding positions include 274-278 and Asn342; that span reads NSCGF. FMN is bound at residue Asn342. Ser345 functions as the Nucleophile in the catalytic mechanism. Asn347 lines the substrate pocket. Lys429 provides a ligand contact to FMN. Position 458 to 459 (458 to 459) interacts with substrate; sequence NT. FMN contacts are provided by residues 477–478, 505–507, and 528–529; these read SG, SGG, and YS.

This sequence belongs to the dihydroorotate dehydrogenase family. Type 2 subfamily. Monomer. It depends on FMN as a cofactor.

The protein localises to the mitochondrion inner membrane. The catalysed reaction is (S)-dihydroorotate + a quinone = orotate + a quinol. It functions in the pathway pyrimidine metabolism; UMP biosynthesis via de novo pathway; orotate from (S)-dihydroorotate (quinone route): step 1/1. Functionally, catalyzes the conversion of dihydroorotate to orotate with quinone as electron acceptor. The sequence is that of Dihydroorotate dehydrogenase (quinone), mitochondrial from Plasmodium falciparum (isolate 3D7).